The chain runs to 403 residues: 8-amino-7-oxononanoate synthase (403 aa).

Residue Arg30 coordinates substrate. Gly121–Tyr122 is a pyridoxal 5'-phosphate binding site. His146 provides a ligand contact to substrate. Ser192, His220, and Thr248 together coordinate pyridoxal 5'-phosphate. The residue at position 251 (Lys251) is an N6-(pyridoxal phosphate)lysine. Position 367 (Thr367) interacts with substrate.

This sequence belongs to the class-II pyridoxal-phosphate-dependent aminotransferase family. BioF subfamily. As to quaternary structure, homodimer. Pyridoxal 5'-phosphate is required as a cofactor.

It carries out the reaction 6-carboxyhexanoyl-[ACP] + L-alanine + H(+) = (8S)-8-amino-7-oxononanoate + holo-[ACP] + CO2. It functions in the pathway cofactor biosynthesis; biotin biosynthesis. Its function is as follows. Catalyzes the decarboxylative condensation of pimeloyl-[acyl-carrier protein] and L-alanine to produce 8-amino-7-oxononanoate (AON), [acyl-carrier protein], and carbon dioxide. This chain is 8-amino-7-oxononanoate synthase, found in Burkholderia vietnamiensis (strain G4 / LMG 22486) (Burkholderia cepacia (strain R1808)).